A 214-amino-acid polypeptide reads, in one-letter code: Probable GTP-binding protein EngB (214 aa).

The region spanning 31–214 (GPPEIAFAGR…LRAAILQTIA (184 aa)) is the EngB-type G domain. GTP-binding positions include 39 to 46 (GRSNVGKS), 66 to 70 (GRTQE), 93 to 96 (DMPG), 160 to 163 (TKSD), and 194 to 196 (TSS). Residues Ser-46 and Thr-68 each contribute to the Mg(2+) site.

The protein belongs to the TRAFAC class TrmE-Era-EngA-EngB-Septin-like GTPase superfamily. EngB GTPase family. Mg(2+) is required as a cofactor.

Its function is as follows. Necessary for normal cell division and for the maintenance of normal septation. This chain is Probable GTP-binding protein EngB, found in Bartonella tribocorum (strain CIP 105476 / IBS 506).